Reading from the N-terminus, the 377-residue chain is Diels-Alderase fsa2 (377 aa).

Belongs to the Diels-Alderase family.

The enzyme catalyses (5S)-3-[(2E,6R,8E,10E,12E)-2,6-dimethyltetradeca-2,8,10,12-tetraenoyl]-5-(hydroxymethyl)pyrrolidine-2,4-dione = trichosetin. It functions in the pathway mycotoxin biosynthesis. In terms of biological role, diels-Alderase; part of the gene cluster that mediates the biosynthesis of equisetin, a trans-fused decalin-containing tetramic acid with antimicrobial activity. The PKS module of eqxS together with the enoylreductase eqxC catalyze the formation of the polyketide unit which is then conjugated to L-serine by the condensation domain of the eqxS NRPS module. Activity of the Dieckmann cyclase domain (RED) results in release of the Dieckmann product intermediate. Diels-Alderase eqx3 is involved in endo-selective Diels-Alder cycloaddition to form the decalin ring, leading to the production of N-desmethylequisetin also called trichosetin. Subsequent N-methylation is carried out by eqxD to give equisetin. This chain is Diels-Alderase fsa2, found in Fusarium heterosporum.